Consider the following 129-residue polypeptide: Putative pre-16S rRNA nuclease (129 aa).

Belongs to the YqgF nuclease family.

It is found in the cytoplasm. In terms of biological role, could be a nuclease involved in processing of the 5'-end of pre-16S rRNA. The sequence is that of Putative pre-16S rRNA nuclease from Campylobacter jejuni subsp. doylei (strain ATCC BAA-1458 / RM4099 / 269.97).